A 138-amino-acid chain; its full sequence is Basic phospholipase A2 homolog Vur-S49 (138 aa).

An N-terminal signal peptide occupies residues 1–16; the sequence is MRALWIVAVCLIGVEG. 7 cysteine pairs are disulfide-bonded: Cys42–Cys131, Cys44–Cys60, Cys59–Cys111, Cys65–Cys138, Cys66–Cys104, Cys73–Cys97, and Cys91–Cys102. Residues 121–133 form an important for membrane-damaging activities in eukaryotes and bacteria; heparin-binding region; sequence KKYKVYLRFKCKG.

This sequence belongs to the phospholipase A2 family. Group II subfamily. S49 sub-subfamily. In terms of tissue distribution, expressed by the venom gland.

Its subcellular location is the secreted. In terms of biological role, snake venom phospholipase A2 homolog that lacks enzymatic activity. Is able to suppress the acetylcholine (ACh)-evoked current mediated by alpha-7 (CHRNA7)-similar nAChRs in L.stagnalis neurons (IC(50)=2.18 uM). This activity is only partially reversible and seems to be non-competitive. The protein is Basic phospholipase A2 homolog Vur-S49 of Vipera renardi (Steppe viper).